We begin with the raw amino-acid sequence, 60 residues long: Waprin-Lio1 (60 aa).

The first 8 residues, 1 to 8 (MLLGTTSA), serve as a signal peptide directing secretion. One can recognise a WAP domain in the interval 9 to 59 (QVVRPGSCPNVDVPIPPLGLCRTTCQTDANCQEGRKCCKNGCGFMTCETAR). Cystine bridges form between Cys-16–Cys-46, Cys-29–Cys-50, Cys-33–Cys-45, and Cys-39–Cys-55.

Belongs to the venom waprin family. In terms of tissue distribution, expressed by the venom gland.

The protein localises to the secreted. Damages membranes of susceptible bacteria. Has no hemolytic activity. Not toxic to mice. Does not inhibit the proteinases elastase and cathepsin G. This is Waprin-Lio1 from Erythrolamprus poecilogyrus (Water snake).